The chain runs to 205 residues: Penta-EF hand domain-containing protein 2 (205 aa).

EF-hand domains are found at residues 45–75 (EMQS…GGTP), 76–111 (LGIE…INNL), and 119–141 (DRNF…SGFQ). Positions 54, 56, 58, 60, 65, 89, 91, 93, 95, and 100 each coordinate Ca(2+).

The protein belongs to the Peflin/Sorcin family. In contrast to pefA, does not form homodimers in presence of Ca(2+). May form heterodimers with pefA.

The protein localises to the cytoplasm. It is found in the membrane. This Dictyostelium discoideum (Social amoeba) protein is Penta-EF hand domain-containing protein 2 (pefB).